A 358-amino-acid chain; its full sequence is DnaJ homolog subfamily B member 11 (358 aa).

Residues 1 to 22 form the signal peptide; sequence MAPQNLSTFCLLLLYLIGTVIA. The 66-residue stretch at 25 to 90 folds into the J domain; that stretch reads DFYKILGVPR…EKRKQYDTYG (66 aa). At Thr-188 the chain carries Phosphothreonine. Residue Asn-261 is glycosylated (N-linked (GlcNAc...) asparagine).

In terms of assembly, part of a large chaperone multiprotein complex comprising DNAJB11, HSP90B1, HSPA5, HYOU, PDIA2, PDIA4, PDIA6, PPIB, SDF2L1, UGGT1 and very small amounts of ERP29, but not, or at very low levels, CALR nor CANX. Binds to denatured substrates in an ATP-independent manner. Interacts via the J domain with HSPA5 in an ATP-dependent manner. Post-translationally, contains high-mannose Endo H-sensitive carbohydrates. Cys-169, Cys-171, Cys-193 and Cys-196 form intramolecular disulfide bonds. The preferential partner for each Cys is not known.

The protein localises to the endoplasmic reticulum lumen. Its function is as follows. As a co-chaperone for HSPA5 it is required for proper folding, trafficking or degradation of proteins. Binds directly to both unfolded proteins that are substrates for ERAD and nascent unfolded peptide chains, but dissociates from the HSPA5-unfolded protein complex before folding is completed. May help recruiting HSPA5 and other chaperones to the substrate. Stimulates HSPA5 ATPase activity. It is necessary for maturation and correct trafficking of PKD1. This is DnaJ homolog subfamily B member 11 (Dnajb11) from Mus musculus (Mouse).